We begin with the raw amino-acid sequence, 708 residues long: Capsid scaffolding protein (708 aa).

Catalysis depends on charge relay system residues H63, S132, and H157. Disordered stretches follow at residues 270–339 (SAER…MSHP), 455–565 (HPSY…QQQR), and 593–620 (ALPSAASSSPTTTTVCTPTSELTSGGGE). Residues 284–293 (PAAGARVPSS) are compositionally biased toward low complexity. The segment covering 294–311 (SPSPPVEPPSPVQPPALP) has biased composition (pro residues). Residues 326–339 (SPSEPAEAASMSHP) are compositionally biased toward low complexity. The interaction with pAP stretch occupies residues 333–352 (AASMSHPLSAAVPAATAPPG). A compositionally biased stretch (basic residues) spans 498-513 (KQHRHGGSGGHNKRRK). 2 short sequence motifs (nuclear localization signal) span residues 510-515 (KRRKET) and 537-543 (RARKRLK). Over residues 593 to 615 (ALPSAASSSPTTTTVCTPTSELT) the composition is skewed to low complexity. The segment at 688 to 708 (PPKDMVDLNRRIFVAALNKLE) is interaction with major capsid protein.

The protein belongs to the herpesviridae capsid scaffolding protein family. In terms of assembly, homomultimer. Interacts with major capsid protein. As to quaternary structure, exists in a monomer-dimer equilibrium with the dimer being the active species. In terms of processing, capsid scaffolding protein is cleaved by assemblin after formation of the spherical procapsid. As a result, the capsid obtains its mature, icosahedral shape. Cleavages occur at two or more sites: release (R-site) and maturation (M-site).

It is found in the host cytoplasm. It localises to the host nucleus. The catalysed reaction is Cleaves -Ala-|-Ser- and -Ala-|-Ala- bonds in the scaffold protein.. Acts as a scaffold protein by binding major capsid protein in the cytoplasm, inducing the nuclear localization of both proteins. Multimerizes in the nucleus such as major capsid protein forms the icosahedral T=16 capsid. Autocatalytic cleavage releases the assembly protein, and subsequently abolishes interaction with major capsid protein. Cleavages products are evicted from the capsid before or during DNA packaging. Functionally, protease that plays an essential role in virion assembly within the nucleus. Catalyzes the cleavage of the assembly protein after formation of the spherical procapsid. By that cleavage, the capsid matures and gains its icosahedral shape. The cleavage sites seem to include -Ala-Ser-, -Ala-Ala-, as well as Ala-Thr bonds. Assemblin and cleavages products are evicted from the capsid before or during DNA packaging. In terms of biological role, plays a major role in capsid assembly. Acts as a scaffold protein by binding major capsid protein. Multimerizes in the nucleus such as major capsid protein forms the icosahedral T=16 capsid. Cleaved by assemblin after capsid completion. The cleavages products are evicted from the capsid before or during DNA packaging. The chain is Capsid scaffolding protein (UL80) from Homo sapiens (Human).